We begin with the raw amino-acid sequence, 141 residues long: Nucleoside diphosphate kinase (141 aa).

ATP-binding residues include lysine 11, phenylalanine 59, arginine 87, threonine 93, arginine 104, and asparagine 114. Histidine 117 serves as the catalytic Pros-phosphohistidine intermediate.

Belongs to the NDK family. Homotetramer. Requires Mg(2+) as cofactor.

It is found in the cytoplasm. It carries out the reaction a 2'-deoxyribonucleoside 5'-diphosphate + ATP = a 2'-deoxyribonucleoside 5'-triphosphate + ADP. It catalyses the reaction a ribonucleoside 5'-diphosphate + ATP = a ribonucleoside 5'-triphosphate + ADP. In terms of biological role, major role in the synthesis of nucleoside triphosphates other than ATP. The ATP gamma phosphate is transferred to the NDP beta phosphate via a ping-pong mechanism, using a phosphorylated active-site intermediate. The protein is Nucleoside diphosphate kinase of Azoarcus sp. (strain BH72).